The following is an 817-amino-acid chain: B lymphocyte-induced maturation protein 1 homolog (817 aa).

Positions 1–62 (MGQGSGDDGV…PAGVSASGAR (62 aa)) are disordered. Low complexity predominate over residues 15 to 61 (FSSAAAAAHSPPHSPLSVGVSSASSATSSSSTPPSSTSPAGVSASGA). The 139-residue stretch at 103 to 241 (MNLILKSSSK…ANTELSFWFS (139 aa)) folds into the SET domain. 4 consecutive C2H2-type zinc fingers follow at residues 508 to 530 (YACK…VRTH), 536 to 558 (FKCE…HLVH), 564 to 586 (HRCD…LRLH), and 592 to 614 (YTCD…KRLH). The C2H2-type 5; degenerate zinc finger occupies 620–642 (YSCGTCGKKYISPSGLRTHWKTT). Positions 709–817 (LLGQGPSGMQ…LPSLGLPHYP (109 aa)) are disordered. Residues 779 to 794 (QGGPSSGSGQQQHPQH) are compositionally biased toward low complexity.

As to quaternary structure, interacts with dre-1; the interaction targets blmp-1 for proteasomal degradation. Interacts with ldb-1 and ham-3. Post-translationally, ubiquitinated by the SCF(dre-1) complex, leading to its degradation by the proteasome. As to expression, expressed in hypodermal, vulval, intestinal and distal tip cells.

The protein resides in the nucleus. It is found in the cytoplasm. Transcription factor which binds to enhancer elements in the promoter region of genes. Regulates the expression of the transcription factor bed-3 to control vulval development. Promotes terminal differentiation in the hypodermis and is involved in regulation of gonadal outgrowth and entry into the dauer stage. Regulates the timing of dorsalward migration of the distal tip cells of the hermaphrodite gonad by inhibiting precocious unc-5 and lin-29 expression which in turn prevents early dorsalward turning. Plays a role in male tail tip morphogenesis. This Caenorhabditis elegans protein is B lymphocyte-induced maturation protein 1 homolog.